Reading from the N-terminus, the 203-residue chain is Holliday junction branch migration complex subunit RuvA (203 aa).

The domain I stretch occupies residues 1-64 (MIGRLRGIIL…EDAQLLYGFN (64 aa)). A domain II region spans residues 65–142 (NKQERTLFKE…KGLHGDLFTP (78 aa)). Positions 143-154 (AVDLVLTSPASP) are flexible linker. The tract at residues 155 to 203 (TSEDAEQEAVAALVALGYKPQEASRMVSKIARPDASSETLIRDALRAAL) is domain III.

The protein belongs to the RuvA family. Homotetramer. Forms an RuvA(8)-RuvB(12)-Holliday junction (HJ) complex. HJ DNA is sandwiched between 2 RuvA tetramers; dsDNA enters through RuvA and exits via RuvB. An RuvB hexamer assembles on each DNA strand where it exits the tetramer. Each RuvB hexamer is contacted by two RuvA subunits (via domain III) on 2 adjacent RuvB subunits; this complex drives branch migration. In the full resolvosome a probable DNA-RuvA(4)-RuvB(12)-RuvC(2) complex forms which resolves the HJ.

The protein resides in the cytoplasm. The RuvA-RuvB-RuvC complex processes Holliday junction (HJ) DNA during genetic recombination and DNA repair, while the RuvA-RuvB complex plays an important role in the rescue of blocked DNA replication forks via replication fork reversal (RFR). RuvA specifically binds to HJ cruciform DNA, conferring on it an open structure. The RuvB hexamer acts as an ATP-dependent pump, pulling dsDNA into and through the RuvAB complex. HJ branch migration allows RuvC to scan DNA until it finds its consensus sequence, where it cleaves and resolves the cruciform DNA. The protein is Holliday junction branch migration complex subunit RuvA of Salmonella agona (strain SL483).